A 160-amino-acid chain; its full sequence is Eosinophil cationic protein (160 aa).

Residues 1 to 27 form the signal peptide; it reads MVPKLFTPQICLLLLLGLMGVEGSLHA. The interval 28–72 is required for nearly all of the bactericidal activities; partially involved in LPS-binding; that stretch reads RPPQFTKAQWFAIQHINVNPPRCTIAMRVINNYQRRCKNQNTFLR. H42 (proton acceptor) is an active-site residue. 4 cysteine pairs are disulfide-bonded: C50–C110, C64–C123, C82–C138, and C89–C98. 3'-nitrotyrosine is present on Y60. 65-69 provides a ligand contact to substrate; sequence KNQNT. N-linked (GlcNAc...) asparagine glycans are attached at residues N84, N92, and N119. H155 acts as the Proton donor in catalysis.

It belongs to the pancreatic ribonuclease family. In terms of assembly, interacts with bacterial lipopolysaccharide (LPS) and lipoteichoic acid (LTA). In vitro interacts with phospholipid bilayers.

It localises to the secreted. Functionally, cytotoxin and helminthotoxin with low-efficiency ribonuclease activity. Possesses a wide variety of biological activities. Exhibits antibacterial activity. The protein is Eosinophil cationic protein (RNASE3) of Macaca nemestrina (Pig-tailed macaque).